A 266-amino-acid polypeptide reads, in one-letter code: Interleukin-1 beta (266 aa).

A propeptide spanning residues 1 to 113 (MATVPEPINE…ETSSDEFLCD (113 aa)) is cleaved from the precursor.

This sequence belongs to the IL-1 family. Monomer. In its precursor form, weakly interacts with full-length MEFV; the mature cytokine does not interact at all. Interacts with integrins ITGAV:ITGBV and ITGA5:ITGB1; integrin-binding is required for IL1B signaling. Interacts with cargo receptor TMED10; the interaction is direct and is required for the secretion of IL1B mature form. Interacts with HSP90AB1; the interaction facilitates cargo translocation into the ERGIC. Interacts with HSP90B1; the interaction facilitates cargo translocation into the ERGIC.

The protein localises to the cytoplasm. It is found in the cytosol. The protein resides in the secreted. It localises to the lysosome. Its subcellular location is the extracellular exosome. Potent pro-inflammatory cytokine. Initially discovered as the major endogenous pyrogen, induces prostaglandin synthesis, neutrophil influx and activation, T-cell activation and cytokine production, B-cell activation and antibody production, and fibroblast proliferation and collagen production. Promotes Th17 differentiation of T-cells. Synergizes with IL12/interleukin-12 to induce IFNG synthesis from T-helper 1 (Th1) cells. Plays a role in angiogenesis by inducing VEGF production synergistically with TNF and IL6. Involved in transduction of inflammation downstream of pyroptosis: its mature form is specifically released in the extracellular milieu by passing through the gasdermin-D (GSDMD) pore. The polypeptide is Interleukin-1 beta (IL1B) (Bubalus carabanensis (Swamp type water buffalo)).